A 104-amino-acid polypeptide reads, in one-letter code: DNA-directed RNA polymerase subunit omega (104 aa).

Residues 53–104 form a disordered region; it reads EIESGNVTIHPDPEGKREAVRRRIEEEKRRKEEEEKKIKEQIAKEKEDGEKI. Positions 63–104 are enriched in basic and acidic residues; it reads PDPEGKREAVRRRIEEEKRRKEEEEKKIKEQIAKEKEDGEKI.

The protein belongs to the RNA polymerase subunit omega family. As to quaternary structure, the RNAP catalytic core consists of 2 alpha, 1 beta, 1 beta' and 1 omega subunit. When a sigma factor is associated with the core the holoenzyme is formed, which can initiate transcription.

It catalyses the reaction RNA(n) + a ribonucleoside 5'-triphosphate = RNA(n+1) + diphosphate. Functionally, promotes RNA polymerase assembly. Latches the N- and C-terminal regions of the beta' subunit thereby facilitating its interaction with the beta and alpha subunits. The polypeptide is DNA-directed RNA polymerase subunit omega (Streptococcus pneumoniae serotype 2 (strain D39 / NCTC 7466)).